A 165-amino-acid chain; its full sequence is Protein-export protein SecB (165 aa).

The protein belongs to the SecB family. As to quaternary structure, homotetramer, a dimer of dimers. One homotetramer interacts with 1 SecA dimer.

It is found in the cytoplasm. Functionally, one of the proteins required for the normal export of preproteins out of the cell cytoplasm. It is a molecular chaperone that binds to a subset of precursor proteins, maintaining them in a translocation-competent state. It also specifically binds to its receptor SecA. The protein is Protein-export protein SecB of Ruegeria pomeroyi (strain ATCC 700808 / DSM 15171 / DSS-3) (Silicibacter pomeroyi).